The following is a 57-amino-acid chain: High-potential iron-sulfur protein (57 aa).

[4Fe-4S] cluster is bound by residues Cys-21, Cys-24, Cys-33, and Cys-46.

The protein belongs to the high-potential iron-sulfur protein (HiPIP) family. Homodimer.

In terms of biological role, specific class of high-redox-potential 4Fe-4S ferredoxins. Functions in anaerobic electron transport in most purple and in some other photosynthetic bacteria and in at least one genus (Paracoccus) of halophilic, denitrifying bacteria. This Rhodopila globiformis (Rhodopseudomonas globiformis) protein is High-potential iron-sulfur protein (hip).